Here is a 187-residue protein sequence, read N- to C-terminus: MLDSANYTPRLKAVYRDTIRAALKEEFGYKNDMQIPRLDKIVLNIGCGAEAVRDSKKAKSAQADLTLIAGQKAMTTTAKKSIAGFRVREEMPLGAKVTLRGDRMYEFLDRLITIAMPRIRDFRGISGKSFDGRGNYAMGLKEHLVFPEIDFDKIDENWGMDIVIATTAQTDAEAKSLLKAFNMPFNS.

It belongs to the universal ribosomal protein uL5 family. Part of the 50S ribosomal subunit; part of the 5S rRNA/L5/L18/L25 subcomplex. Contacts the 5S rRNA and the P site tRNA. Forms a bridge to the 30S subunit in the 70S ribosome.

Functionally, this is one of the proteins that bind and probably mediate the attachment of the 5S RNA into the large ribosomal subunit, where it forms part of the central protuberance. In the 70S ribosome it contacts protein S13 of the 30S subunit (bridge B1b), connecting the 2 subunits; this bridge is implicated in subunit movement. Contacts the P site tRNA; the 5S rRNA and some of its associated proteins might help stabilize positioning of ribosome-bound tRNAs. This chain is Large ribosomal subunit protein uL5, found in Roseobacter denitrificans (strain ATCC 33942 / OCh 114) (Erythrobacter sp. (strain OCh 114)).